The chain runs to 197 residues: Nucleoid occlusion factor SlmA (197 aa).

The region spanning 6–66 (NDRRTQILQA…GLIEFIEESL (61 aa)) is the HTH tetR-type domain. The segment at residues 29-48 (TTAALAKQVGVSEAALYRHF) is a DNA-binding region (H-T-H motif).

This sequence belongs to the nucleoid occlusion factor SlmA family. In terms of assembly, homodimer. Interacts with FtsZ.

The protein resides in the cytoplasm. It is found in the nucleoid. In terms of biological role, required for nucleoid occlusion (NO) phenomenon, which prevents Z-ring formation and cell division over the nucleoid. Acts as a DNA-associated cell division inhibitor that binds simultaneously chromosomal DNA and FtsZ, and disrupts the assembly of FtsZ polymers. SlmA-DNA-binding sequences (SBS) are dispersed on non-Ter regions of the chromosome, preventing FtsZ polymerization at these regions. In Marinomonas sp. (strain MWYL1), this protein is Nucleoid occlusion factor SlmA.